We begin with the raw amino-acid sequence, 77 residues long: Translation initiation factor IF-1, chloroplastic (77 aa).

In terms of domain architecture, S1-like spans 1–72; the sequence is MRKQNLIEME…TKGRITYRLR (72 aa).

This sequence belongs to the IF-1 family. In terms of assembly, component of the 30S ribosomal translation pre-initiation complex which assembles on the 30S ribosome in the order IF-2 and IF-3, IF-1 and N-formylmethionyl-tRNA(fMet); mRNA recruitment can occur at any time during PIC assembly.

It is found in the plastid. It localises to the chloroplast. Functionally, one of the essential components for the initiation of protein synthesis. Stabilizes the binding of IF-2 and IF-3 on the 30S subunit to which N-formylmethionyl-tRNA(fMet) subsequently binds. Helps modulate mRNA selection, yielding the 30S pre-initiation complex (PIC). Upon addition of the 50S ribosomal subunit IF-1, IF-2 and IF-3 are released leaving the mature 70S translation initiation complex. The polypeptide is Translation initiation factor IF-1, chloroplastic (Staurastrum punctulatum (Green alga)).